Consider the following 447-residue polypeptide: Sensor protein VanSB (447 aa).

Helical transmembrane passes span 10-30 and 137-155; these read VFSY…TLFA and GIVM…AYIF. An HAMP domain is found at 157-208; it reads RQMTTPIKALADSANKMANLKEVPPPLERKDELGALAHDMHSMYIRLKETIA. One can recognise a Histidine kinase domain in the interval 230–445; it reads AASHELKTPI…LFWLDLPPTS (216 aa). H233 bears the Phosphohistidine; by autocatalysis mark.

The protein localises to the cell membrane. The catalysed reaction is ATP + protein L-histidine = ADP + protein N-phospho-L-histidine.. Member of the two-component regulatory system VanSB/VanRB. Activates the transcription of vanSB, vanYB and vanW in response to vancomycin which results in vancomycin resistance. VanSB may activate VanRB by phosphorylation. May also act as a phospho-VanRB phosphatase. The protein is Sensor protein VanSB (vanSB) of Enterococcus faecalis (strain ATCC 700802 / V583).